Consider the following 243-residue polypeptide: Linker for activation of T-cells family member 2 (243 aa).

Topologically, residues M1–T5 are extracellular. A helical; Signal-anchor for type III membrane protein membrane pass occupies residues E6–V26. Residues C25 and C28 are each lipidated (S-palmitoyl cysteine). Residues R27–A243 lie on the Cytoplasmic side of the membrane. S44 carries the post-translational modification Phosphoserine. Position 58 is a phosphotyrosine (Y58). S59 and S92 each carry phosphoserine. 3 positions are modified to phosphotyrosine: Y136, Y193, and Y233. Residues P174 to A243 form a disordered region.

As to quaternary structure, when phosphorylated, interacts with GRB2. May also interact with SOS1, GAB1 and CBL. Post-translationally, phosphorylated on tyrosines following cross-linking of BCR in B-cells, FCGR1 in myeloid cells, or FCER1 in mast cells; which induces the recruitment of GRB2. May be polyubiquitinated. Highly expressed in spleen, peripheral blood lymphocytes, and germinal centers of lymph nodes. Also expressed in placenta, lung, pancreas and small intestine. Present in B-cells, NK cells and monocytes. Absent from T-cells (at protein level).

It is found in the cell membrane. Its function is as follows. Involved in FCER1 (high affinity immunoglobulin epsilon receptor)-mediated signaling in mast cells. May also be involved in BCR (B-cell antigen receptor)-mediated signaling in B-cells and FCGR1 (high affinity immunoglobulin gamma Fc receptor I)-mediated signaling in myeloid cells. Couples activation of these receptors and their associated kinases with distal intracellular events through the recruitment of GRB2. In Homo sapiens (Human), this protein is Linker for activation of T-cells family member 2 (LAT2).